The primary structure comprises 602 residues: Sodium- and chloride-dependent GABA transporter 2 (602 aa).

The Cytoplasmic segment spans residues 1-40 (MENRASGTTSNGETKPVCPAMEKVEEDGTLEREHWNNKME). 3 consecutive transmembrane segments (helical) span residues 41–61 (FVLS…FPYL), 68–88 (GAFF…VFFL), and 121–141 (IVSL…FYLF). Residues 142 to 206 (SSFTTDLPWG…GIQHLGSLRW (65 aa)) are Extracellular-facing. Cys153 and Cys162 are joined by a disulfide. 3 N-linked (GlcNAc...) asparagine glycosylation sites follow: Asn169, Asn173, and Asn178. A run of 2 helical transmembrane segments spans residues 207–227 (ELVL…WKGV) and 233–253 (VVYF…IRGV). The N-linked (GlcNAc...) asparagine glycan is linked to Asn269. 7 helical membrane passes run 282-302 (AGTQ…ALGS), 319-339 (ILNS…LGFM), 366-386 (VVML…VVLL), 418-438 (VLIL…LTEG), 453-473 (GMCL…VYGA), 490-510 (PLIK…TFLF), and 528-548 (WWGD…IPAW). Over 549-602 (SIYKLRTLKGPLRERLRQLVCPAEDLPQKNQPEPTAPATPMTSLLRLTELESNC) the chain is Cytoplasmic. Residue Thr587 is modified to Phosphothreonine. Ser591 is subject to Phosphoserine.

The protein belongs to the sodium:neurotransmitter symporter (SNF) (TC 2.A.22) family. SLC6A13 subfamily. As to expression, expressed at high levels in liver, followed by kidney and leptomeninges, and very low levels in the cerebellum (at protein level). In the brain, detected in some blood vessels (at protein level). In the kidney, expressed in the cortex, including parts of the proximal tubules, but not in the medulla (at protein level). In the liver, highest expression in periportal hepatocytes, with highest density at the vascular side (at protein level). Also detected at low levels in other organs, including skeletal muscle.

Its subcellular location is the cell membrane. It localises to the basolateral cell membrane. It carries out the reaction 4-aminobutanoate(out) + chloride(out) + 2 Na(+)(out) = 4-aminobutanoate(in) + chloride(in) + 2 Na(+)(in). The catalysed reaction is taurine(out) + chloride(out) + 2 Na(+)(out) = taurine(in) + chloride(in) + 2 Na(+)(in). It catalyses the reaction beta-alanine(out) + chloride(out) + 2 Na(+)(out) = beta-alanine(in) + chloride(in) + 2 Na(+)(in). The enzyme catalyses hypotaurine(out) + chloride(out) + 2 Na(+)(out) = hypotaurine(in) + chloride(in) + 2 Na(+)(in). With respect to regulation, gamma-aminobutyric acid (GABA) transport is inhibited by beta-alanine, taurine, hypotaurine, beta-guanidinopropionic acid, 2,3-diaminopropionic acid, guvacine and nipecotic acid. Beta-alanine transport is inhibited by GABA. Taurine transport is inhibited by GABA, beta-alanine, SNAP-5114, nigericin, nipecotic acid and ouabain. Mediates sodium- and chloride-dependent transport of gamma-aminobutyric acid (GABA). Can also mediate transport of beta-alanine, taurine and hypotaurine and is the major taurine transporter in hepatocytes. This is Sodium- and chloride-dependent GABA transporter 2 (Slc6a13) from Mus musculus (Mouse).